The following is a 207-amino-acid chain: Ribosomal RNA small subunit methyltransferase G (207 aa).

S-adenosyl-L-methionine-binding positions include glycine 73, leucine 78, 124 to 125 (VE), and arginine 139.

The protein belongs to the methyltransferase superfamily. RNA methyltransferase RsmG family.

The protein localises to the cytoplasm. The enzyme catalyses guanosine(527) in 16S rRNA + S-adenosyl-L-methionine = N(7)-methylguanosine(527) in 16S rRNA + S-adenosyl-L-homocysteine. In terms of biological role, specifically methylates the N7 position of guanine in position 527 of 16S rRNA. The sequence is that of Ribosomal RNA small subunit methyltransferase G from Escherichia coli O17:K52:H18 (strain UMN026 / ExPEC).